Here is a 471-residue protein sequence, read N- to C-terminus: UDP-N-acetylmuramoylalanine--D-glutamate ligase (471 aa).

Residue 122-128 (GSNAKST) participates in ATP binding.

Belongs to the MurCDEF family.

Its subcellular location is the cytoplasm. It carries out the reaction UDP-N-acetyl-alpha-D-muramoyl-L-alanine + D-glutamate + ATP = UDP-N-acetyl-alpha-D-muramoyl-L-alanyl-D-glutamate + ADP + phosphate + H(+). It functions in the pathway cell wall biogenesis; peptidoglycan biosynthesis. Its function is as follows. Cell wall formation. Catalyzes the addition of glutamate to the nucleotide precursor UDP-N-acetylmuramoyl-L-alanine (UMA). The polypeptide is UDP-N-acetylmuramoylalanine--D-glutamate ligase (Psychrobacter cryohalolentis (strain ATCC BAA-1226 / DSM 17306 / VKM B-2378 / K5)).